The following is a 209-amino-acid chain: Large ribosomal subunit protein uL3 (209 aa).

It belongs to the universal ribosomal protein uL3 family. In terms of assembly, part of the 50S ribosomal subunit. Forms a cluster with proteins L14 and L19.

Its function is as follows. One of the primary rRNA binding proteins, it binds directly near the 3'-end of the 23S rRNA, where it nucleates assembly of the 50S subunit. In Nitratidesulfovibrio vulgaris (strain DSM 19637 / Miyazaki F) (Desulfovibrio vulgaris), this protein is Large ribosomal subunit protein uL3.